The following is a 147-amino-acid chain: Myoglobin (147 aa).

The Globin domain occupies 2–141 (ADFDAVLKFW…VIADLEANYK (140 aa)). Nitrite is bound at residue His-60. Position 60 (His-60) interacts with O2. His-89 is a heme b binding site.

Belongs to the globin family. In terms of assembly, monomeric.

The protein localises to the cytoplasm. Its subcellular location is the sarcoplasm. It catalyses the reaction Fe(III)-heme b-[protein] + nitric oxide + H2O = Fe(II)-heme b-[protein] + nitrite + 2 H(+). The enzyme catalyses H2O2 + AH2 = A + 2 H2O. Monomeric heme protein which primary function is to store oxygen and facilitate its diffusion within muscle tissues. Reversibly binds oxygen through a pentacoordinated heme iron and enables its timely and efficient release as needed during periods of heightened demand. Depending on the oxidative conditions of tissues and cells, and in addition to its ability to bind oxygen, it also has a nitrite reductase activity whereby it regulates the production of bioactive nitric oxide. Under stress conditions, like hypoxia and anoxia, it also protects cells against reactive oxygen species thanks to its pseudoperoxidase activity. This is Myoglobin (mb) from Sarda chiliensis (Pacific bonito).